Reading from the N-terminus, the 428-residue chain is MKMERSLNLFEEAQRYLVGGVNSPVRAFKSVGMEPLFIQKGKGSRVWDVDGNEYIDYVLSWGPLILGHANDQIVNAIKQVANYGTSFGAPTELEIEMAKAVVDAVPSIEMVRFVNSGTEATMSAIRLARGYTGKKKIVKFEGCYHGHVDSLLVSAGSGVATLSIPGTPGIPEEFANLTIVLPYNNIDAVEETFKKHGDDIACVIIEPVAGNMGVVAPSKEYHQRLREITKEYGALLIWDEVMTGFRLAYGGAQELYGIEPDLTTLGKVIGGGLPVGAYGGKREIMEYVAPVGPVYQAGTLSGNPLAMAGGLRQLQILKEKNPYPDLDRKGKKLEEGLRYLSEKYGIPATVNRVGSMITAFFTDKEVVDFETAKSSDLDRFAKFFRLMLEKGVYLAPSQFEAAFLSTAHSDEDIDETLNKAEDCFKQLL.

At Lys267 the chain carries N6-(pyridoxal phosphate)lysine.

This sequence belongs to the class-III pyridoxal-phosphate-dependent aminotransferase family. HemL subfamily. Homodimer. Requires pyridoxal 5'-phosphate as cofactor.

The protein resides in the cytoplasm. It catalyses the reaction (S)-4-amino-5-oxopentanoate = 5-aminolevulinate. Its pathway is porphyrin-containing compound metabolism; protoporphyrin-IX biosynthesis; 5-aminolevulinate from L-glutamyl-tRNA(Glu): step 2/2. The polypeptide is Glutamate-1-semialdehyde 2,1-aminomutase (Persephonella marina (strain DSM 14350 / EX-H1)).